We begin with the raw amino-acid sequence, 176 residues long: ATP-dependent protease subunit HslV (176 aa).

Residue threonine 6 is part of the active site. 3 residues coordinate Na(+): serine 161, cysteine 164, and threonine 167.

Belongs to the peptidase T1B family. HslV subfamily. As to quaternary structure, a double ring-shaped homohexamer of HslV is capped on each side by a ring-shaped HslU homohexamer. The assembly of the HslU/HslV complex is dependent on binding of ATP.

It localises to the cytoplasm. It carries out the reaction ATP-dependent cleavage of peptide bonds with broad specificity.. With respect to regulation, allosterically activated by HslU binding. Functionally, protease subunit of a proteasome-like degradation complex believed to be a general protein degrading machinery. This is ATP-dependent protease subunit HslV from Thermosipho melanesiensis (strain DSM 12029 / CIP 104789 / BI429).